The following is a 152-amino-acid chain: Ribosome maturation factor RimP (152 aa).

This sequence belongs to the RimP family.

It localises to the cytoplasm. In terms of biological role, required for maturation of 30S ribosomal subunits. The polypeptide is Ribosome maturation factor RimP (Aeromonas hydrophila subsp. hydrophila (strain ATCC 7966 / DSM 30187 / BCRC 13018 / CCUG 14551 / JCM 1027 / KCTC 2358 / NCIMB 9240 / NCTC 8049)).